A 108-amino-acid chain; its full sequence is uncharacterized protein (108 aa).

Residue asparagine 33 is glycosylated (N-linked (GlcNAc...) asparagine).

N-glycosylated.

This is an uncharacterized protein from Saccharomyces cerevisiae (strain ATCC 204508 / S288c) (Baker's yeast).